The primary structure comprises 515 residues: ATP synthase subunit alpha (515 aa).

Residue G169–T176 coordinates ATP.

This sequence belongs to the ATPase alpha/beta chains family. As to quaternary structure, F-type ATPases have 2 components, CF(1) - the catalytic core - and CF(0) - the membrane proton channel. CF(1) has five subunits: alpha(3), beta(3), gamma(1), delta(1), epsilon(1). CF(0) has three main subunits: a(1), b(2) and c(9-12). The alpha and beta chains form an alternating ring which encloses part of the gamma chain. CF(1) is attached to CF(0) by a central stalk formed by the gamma and epsilon chains, while a peripheral stalk is formed by the delta and b chains.

Its subcellular location is the cell inner membrane. It carries out the reaction ATP + H2O + 4 H(+)(in) = ADP + phosphate + 5 H(+)(out). Its function is as follows. Produces ATP from ADP in the presence of a proton gradient across the membrane. The alpha chain is a regulatory subunit. This Neisseria meningitidis serogroup A / serotype 4A (strain DSM 15465 / Z2491) protein is ATP synthase subunit alpha.